A 178-amino-acid polypeptide reads, in one-letter code: CASP-like protein 5A1 (178 aa).

Residues 1–24 are disordered; sequence MFASRPAVHPVEAPPPTDPVEQPT. At 1 to 37 the chain is on the cytoplasmic side; it reads MFASRPAVHPVEAPPPTDPVEQPTGVLMKDLPGMPGT. A helical membrane pass occupies residues 38–58; sequence AGGLGLRVAQFVFAGVALAVM. Residues 59-69 lie on the Extracellular side of the membrane; the sequence is ASTSDFPSVTA. Residues 70 to 90 traverse the membrane as a helical segment; sequence FCYLVAATIMQCLWSFSLAIV. Residues 91-105 are Cytoplasmic-facing; the sequence is DIYALLVKRCLRNRR. Residues 106-126 traverse the membrane as a helical segment; sequence AVCLFAIGDGITAALTFGAAC. Residues 127–152 lie on the Extracellular side of the membrane; it reads SSAGITVLIDNDLNICAENHCGSFKT. The helical transmembrane segment at 153-173 threads the bilayer; the sequence is ATALAFMSWFALTPSFLLNFW. The Cytoplasmic portion of the chain corresponds to 174–178; the sequence is SMAAR.

This sequence belongs to the Casparian strip membrane proteins (CASP) family. Homodimer and heterodimers.

It is found in the cell membrane. The chain is CASP-like protein 5A1 from Brachypodium distachyon (Purple false brome).